A 465-amino-acid polypeptide reads, in one-letter code: Pancreatic triacylglycerol lipase (465 aa).

The first 16 residues, 1–16 (MLLLWALPLLLGAVAG), serve as a signal peptide directing secretion. 2 cysteine pairs are disulfide-bonded: Cys-20–Cys-26 and Cys-108–Cys-119. The Nucleophile role is filled by Ser-170. Asp-194 (charge relay system) is an active-site residue. Residues Glu-205, Arg-208, Asp-210, and Asp-213 each coordinate Ca(2+). An intrachain disulfide couples Cys-255 to Cys-279. His-281 functions as the Charge relay system in the catalytic mechanism. 3 disulfide bridges follow: Cys-303–Cys-314, Cys-317–Cys-321, and Cys-449–Cys-465. Residues 355 to 465 (WRYQVAVTLS…EDILLTLTPC (111 aa)) form the PLAT domain.

The protein belongs to the AB hydrolase superfamily. Lipase family. As to quaternary structure, forms a 1:1 stoichiometric complex with (pro)colipase/CLPS.

The protein localises to the secreted. It catalyses the reaction a triacylglycerol + H2O = a diacylglycerol + a fatty acid + H(+). It carries out the reaction 1,2,3-tributanoylglycerol + H2O = dibutanoylglycerol + butanoate + H(+). The catalysed reaction is 1,2,3-tri-(9Z-octadecenoyl)-glycerol + H2O = di-(9Z)-octadecenoylglycerol + (9Z)-octadecenoate + H(+). The enzyme catalyses all-trans-retinyl hexadecanoate + H2O = all-trans-retinol + hexadecanoate + H(+). It catalyses the reaction 1,2-di-(9Z-octadecenoyl)-glycerol + H2O = (9Z-octadecenoyl)-glycerol + (9Z)-octadecenoate + H(+). Inhibited by bile salts, is reactivated by (pro)colipase/CLPS. In terms of biological role, plays an important role in fat metabolism. It preferentially splits the esters of long-chain fatty acids at positions 1 and 3, producing mainly 2-monoacylglycerol and free fatty acids, and shows considerably higher activity against insoluble emulsified substrates than against soluble ones. This chain is Pancreatic triacylglycerol lipase (PNLIP), found in Oryctolagus cuniculus (Rabbit).